The following is a 237-amino-acid chain: MNAQAEEFKKYLETNGIKPKQFHKKELIFNQWDPQEYCIFLYDGITKLTSISENGTIMNLQYYKGAFVIMSGFIDTETSVGYYNLEVISEQATAYVIKINELKELLSKNLTHFFYVFQTLQKQVSYSLAKFNDFSINGKLGSICGQLLILTYVYGKETPDGIKITLDNLTMQELGYSSGIAHSSAVSRIISKLKQEKVIVYKNSCFYVQNLDYLKRYAPKLDEWFYLACPATWGKLN.

Residues 137–212 (NGKLGSICGQ…NSCFYVQNLD (76 aa)) form the HTH crp-type domain.

In terms of biological role, positively regulates expression of listeriolysin, of 1-phosphadidylinositol phosphodiesterase (PI-PLC) and other virulence factors. The sequence is that of Listeriolysin regulatory protein (prfA) from Listeria monocytogenes serovar 1/2a (strain ATCC BAA-679 / EGD-e).